The chain runs to 110 residues: METVAYADFARLEMRVGKIVEVKRHENADKLYIVQVDVGQKTLQTVTSLVPYYSEEELMGKTVVVLCNLQKAKMRGETSECMLLCAETDDGSESVLLTPERMMPAGVRVV.

In terms of domain architecture, tRNA-binding spans 8–110; the sequence is DFARLEMRVG…RMMPAGVRVV (103 aa).

Homodimer.

In Escherichia coli (strain K12), this protein is tRNA-binding protein YgjH (ygjH).